The primary structure comprises 96 residues: Dynein light chain roadblock-type 2 (96 aa).

An N-acetylalanine modification is found at alanine 2.

This sequence belongs to the GAMAD family. In terms of assembly, homodimer. The cytoplasmic dynein 1 complex consists of two catalytic heavy chains (HCs) and a number of non-catalytic subunits presented by intermediate chains (ICs), light intermediate chains (LICs) and light chains (LCs); the composition seems to vary in respect to the IC, LIC and LC composition. The heavy chain homodimer serves as a scaffold for the probable homodimeric assembly of the respective non-catalytic subunits. The ICs and LICs bind directly to the HC dimer and the LCs assemble on the IC dimer. Interacts with DYNC1I1 and DYNC1I2. Self-associates. Interacts with DYNLRB1. In terms of tissue distribution, high expression in heart, brain, placenta, skeletal muscle, prostate and small intestine; moderate in kidney, pancreas, spleen, testis, ovary and colon; low in lung, liver, thymus and leukocyte.

Its subcellular location is the cytoplasm. It is found in the cytoskeleton. Its function is as follows. Acts as one of several non-catalytic accessory components of the cytoplasmic dynein 1 complex that are thought to be involved in linking dynein to cargos and to adapter proteins that regulate dynein function. Cytoplasmic dynein 1 acts as a motor for the intracellular retrograde motility of vesicles and organelles along microtubules. This Homo sapiens (Human) protein is Dynein light chain roadblock-type 2 (DYNLRB2).